The chain runs to 153 residues: uncharacterized protein (153 aa).

The interval 17-78 (IYIHTPHPHP…HTTLSNLSLN (62 aa)) is disordered. Positions 22–38 (PHPHPHPHPHTPTHTHP) are enriched in basic residues.

This is an uncharacterized protein from Saccharomyces cerevisiae (strain ATCC 204508 / S288c) (Baker's yeast).